Here is a 393-residue protein sequence, read N- to C-terminus: MAKESYKRDKPHVNIGTIGHVDHGKTTLTAAITSVLAKSGMADAREFGDIDKAPEERERGITISTAHVEYQTVKRHYAHIDCPGHADYIKNMITGAAQMDGAILVVAGTDGPMPQTREHILLARQVNVPALVVFLNKVDIADPELLELVEMELRELLTEYGFPGDDIPIIKGSALKALDGDAEGEKAIMELMDAVDNYIPEPVRDVDKPFLMPVEDVFSISGRGTVGTGRIERGRIKINEEVEIVGIRDTRKSVVTGIEMFQKLLDEGQAGDNAGLLLRGVDKNDLERGMVIAKPGTIKPHTKFKAEVYILKKEEGGRHTPFFTNYRPQFYFRTTDVTGAVSLPEGVEMVMPGDNLSVEVELIAPIAMDEGLRFAIREGGRTVGAGSVTKIND.

In terms of domain architecture, tr-type G spans 10–203 (KPHVNIGTIG…AVDNYIPEPV (194 aa)). The tract at residues 19–26 (GHVDHGKT) is G1. 19–26 (GHVDHGKT) lines the GTP pocket. Mg(2+) is bound at residue Thr-26. Residues 60–64 (GITIS) are G2. The G3 stretch occupies residues 81 to 84 (DCPG). GTP is bound by residues 81–85 (DCPGH) and 136–139 (NKVD). Positions 136–139 (NKVD) are G4. The G5 stretch occupies residues 173 to 175 (SAL).

It belongs to the TRAFAC class translation factor GTPase superfamily. Classic translation factor GTPase family. EF-Tu/EF-1A subfamily. In terms of assembly, monomer.

The protein localises to the cytoplasm. The catalysed reaction is GTP + H2O = GDP + phosphate + H(+). GTP hydrolase that promotes the GTP-dependent binding of aminoacyl-tRNA to the A-site of ribosomes during protein biosynthesis. In Chlorobium phaeovibrioides (strain DSM 265 / 1930) (Prosthecochloris vibrioformis (strain DSM 265)), this protein is Elongation factor Tu.